Consider the following 369-residue polypeptide: uncharacterized protein (369 aa).

This is an uncharacterized protein from Archaeoglobus fulgidus (strain ATCC 49558 / DSM 4304 / JCM 9628 / NBRC 100126 / VC-16).